The sequence spans 662 residues: DNA topoisomerase 4 subunit B (662 aa).

Residues tyrosine 20, asparagine 60, aspartate 87, 129 to 135, and lysine 359 each bind ATP; that span reads GLHGVGI. The Toprim domain maps to 439–553; it reads TELFIVEGDS…EGHLYLAKPP (115 aa). Residues glutamate 445, aspartate 518, and aspartate 520 each coordinate Mg(2+).

Belongs to the type II topoisomerase family. ParE type 1 subfamily. As to quaternary structure, heterotetramer composed of ParC and ParE. The cofactor is Mg(2+). It depends on Mn(2+) as a cofactor. Ca(2+) serves as cofactor.

The enzyme catalyses ATP-dependent breakage, passage and rejoining of double-stranded DNA.. Topoisomerase IV is essential for chromosome segregation. It relaxes supercoiled DNA. Performs the decatenation events required during the replication of a circular DNA molecule. This Rickettsia prowazekii (strain Madrid E) protein is DNA topoisomerase 4 subunit B.